Here is a 245-residue protein sequence, read N- to C-terminus: Malonyl-[acyl-carrier protein] O-methyltransferase (245 aa).

The protein belongs to the methyltransferase superfamily.

The catalysed reaction is malonyl-[ACP] + S-adenosyl-L-methionine = malonyl-[ACP] methyl ester + S-adenosyl-L-homocysteine. It functions in the pathway cofactor biosynthesis; biotin biosynthesis. In terms of biological role, converts the free carboxyl group of a malonyl-thioester to its methyl ester by transfer of a methyl group from S-adenosyl-L-methionine (SAM). It allows to synthesize pimeloyl-ACP via the fatty acid synthetic pathway. This Calditerrivibrio nitroreducens (strain DSM 19672 / NBRC 101217 / Yu37-1) protein is Malonyl-[acyl-carrier protein] O-methyltransferase.